The sequence spans 393 residues: Chalcone synthase LF2 (393 aa).

Cys-164 is a catalytic residue.

This sequence belongs to the thiolase-like superfamily. Chalcone/stilbene synthases family.

The enzyme catalyses (E)-4-coumaroyl-CoA + 3 malonyl-CoA + 3 H(+) = 2',4,4',6'-tetrahydroxychalcone + 3 CO2 + 4 CoA. Its pathway is secondary metabolite biosynthesis; flavonoid biosynthesis. In terms of biological role, the primary product of this enzyme is 4,2',4',6'-tetrahydroxychalcone (also termed naringenin-chalcone or chalcone) which can under specific conditions spontaneously isomerize into naringenin. This Ipomoea batatas (Sweet potato) protein is Chalcone synthase LF2 (CHS-LF2).